The sequence spans 258 residues: Ubiquinone/menaquinone biosynthesis C-methyltransferase UbiE (258 aa).

Positions 1 to 20 (MSESRTSADGGMETSYGFRE) are disordered. S-adenosyl-L-methionine contacts are provided by residues T81, D102, and 130–131 (NA).

This sequence belongs to the class I-like SAM-binding methyltransferase superfamily. MenG/UbiE family.

The enzyme catalyses a 2-demethylmenaquinol + S-adenosyl-L-methionine = a menaquinol + S-adenosyl-L-homocysteine + H(+). It carries out the reaction a 2-methoxy-6-(all-trans-polyprenyl)benzene-1,4-diol + S-adenosyl-L-methionine = a 5-methoxy-2-methyl-3-(all-trans-polyprenyl)benzene-1,4-diol + S-adenosyl-L-homocysteine + H(+). It functions in the pathway quinol/quinone metabolism; menaquinone biosynthesis; menaquinol from 1,4-dihydroxy-2-naphthoate: step 2/2. It participates in cofactor biosynthesis; ubiquinone biosynthesis. In terms of biological role, methyltransferase required for the conversion of demethylmenaquinol (DMKH2) to menaquinol (MKH2) and the conversion of 2-polyprenyl-6-methoxy-1,4-benzoquinol (DDMQH2) to 2-polyprenyl-3-methyl-6-methoxy-1,4-benzoquinol (DMQH2). This chain is Ubiquinone/menaquinone biosynthesis C-methyltransferase UbiE, found in Rhizobium etli (strain CIAT 652).